The following is a 251-amino-acid chain: Derlin-1 (251 aa).

The residue at position 2 (serine 2) is an N-acetylserine. The Cytoplasmic segment spans residues serine 2–threonine 15. A helical transmembrane segment spans residues arginine 16–leucine 31. The Lumenal segment spans residues glycine 32 to glycine 69. The helical transmembrane segment at phenylalanine 70 to glycine 89 threads the bilayer. The Cytoplasmic portion of the chain corresponds to alanine 90–arginine 94. The helical transmembrane segment at proline 95 to alanine 115 threads the bilayer. At methionine 116–methionine 122 the chain is on the lumenal side. A helical membrane pass occupies residues isoleucine 123–asparagine 137. Topologically, residues arginine 138 to tyrosine 154 are cytoplasmic. The chain crosses the membrane as a helical span at residues leucine 155 to isoleucine 166. The Lumenal portion of the chain corresponds to glycine 167–valine 170. Residues isoleucine 171–arginine 189 traverse the membrane as a helical segment. The Cytoplasmic segment spans residues tyrosine 190–glutamine 251. Position 201 is a phosphoserine (serine 201). Phosphothreonine is present on threonine 202. At serine 226 the chain carries Phosphoserine. A disordered region spans residues arginine 229–glutamine 251. The short motif at asparagine 241 to leucine 248 is the SHP-box element.

It belongs to the derlin family. Homotetramer. The four subunits of the tetramer are arranged in a twofold symmetry. Forms homo- and heterooligomers with DERL2 and DERL3; binding to DERL3 is poorer than that between DERL2 and DERL3. Interacts (via SHP-box motif) with VCP. Interacts with AMFR, SELENOS, SEL1L, SELENOK and SYVN1, as well as with SEL1L-SYVN1 and VCP-SELENOS protein complexes; this interaction is weaker than that observed between DERL2 and these complexes. Interacts with NGLY1 and YOD1. Does not bind to EDEM1. Interacts with DNAJB9. Interacts with RNF103. Interacts with HM13. Interacts with XBP1 isoform 1 (via luminal/ectodomain domain); the interaction obviates the need for ectodomain shedding prior HM13/SPP-mediated XBP1 isoform 1 cleavage. Interacts with the signal recognition particle/SRP and the SRP receptor; in the process of endoplasmic reticulum stress-induced pre-emptive quality control. May interact with UBXN6. Interacts with ZFAND2B; probably through VCP. Interacts with CCDC47. Interacts with C18orf32. May interact with TRAM1. Forms a complex with SVIP and VCP/p97. As to expression, widely expressed, with lowest levels in brain and heart.

It is found in the endoplasmic reticulum membrane. Functionally, functional component of endoplasmic reticulum-associated degradation (ERAD) for misfolded lumenal proteins. Forms homotetramers which encircle a large channel traversing the endoplasmic reticulum (ER) membrane. This allows the retrotranslocation of misfolded proteins from the ER into the cytosol where they are ubiquitinated and degraded by the proteasome. The channel has a lateral gate within the membrane which provides direct access to membrane proteins with no need to reenter the ER lumen first. May mediate the interaction between VCP and the misfolded protein. Also involved in endoplasmic reticulum stress-induced pre-emptive quality control, a mechanism that selectively attenuates the translocation of newly synthesized proteins into the endoplasmic reticulum and reroutes them to the cytosol for proteasomal degradation. By controlling the steady-state expression of the IGF1R receptor, indirectly regulates the insulin-like growth factor receptor signaling pathway. This Mus musculus (Mouse) protein is Derlin-1.